Consider the following 173-residue polypeptide: Peptide deformylase (173 aa).

Cys98 and His140 together coordinate Fe cation. Residue Glu141 is part of the active site. His144 lines the Fe cation pocket.

It belongs to the polypeptide deformylase family. Requires Fe(2+) as cofactor.

The catalysed reaction is N-terminal N-formyl-L-methionyl-[peptide] + H2O = N-terminal L-methionyl-[peptide] + formate. Functionally, removes the formyl group from the N-terminal Met of newly synthesized proteins. Requires at least a dipeptide for an efficient rate of reaction. N-terminal L-methionine is a prerequisite for activity but the enzyme has broad specificity at other positions. The sequence is that of Peptide deformylase from Caulobacter sp. (strain K31).